Reading from the N-terminus, the 210-residue chain is Ras-related protein Rab-43 (210 aa).

Residue 23–30 (GDASVGKT) coordinates GTP. The Effector region motif lies at 45–53 (QGSTIGVDF). Ser-47 carries the phosphoserine modification. 71 to 75 (DTAGQ) is a GTP binding site. Thr-80 carries the phosphothreonine modification. Residues 129 to 132 (NKSD) and 161 to 162 (AK) contribute to the GTP site. S-geranylgeranyl cysteine attachment occurs at residues Cys-208 and Cys-210. Cys-210 bears the Cysteine methyl ester mark.

The protein belongs to the small GTPase superfamily. Rab family. As to quaternary structure, interacts with GDI1, GDI2 and CHM; phosphorylation at Thr-80 disrupts these interactions.

It localises to the cytoplasmic vesicle. It is found in the phagosome. The protein localises to the phagosome membrane. The protein resides in the golgi apparatus. Its subcellular location is the trans-Golgi network membrane. It localises to the trans-Golgi network. Functionally, the small GTPases Rab are key regulators of intracellular membrane trafficking, from the formation of transport vesicles to their fusion with membranes. Rabs cycle between an inactive GDP-bound form and an active GTP-bound form that is able to recruit to membranes different set of downstream effectors directly responsible for vesicle formation, movement, tethering and fusion. The low intrinsic GTPase activity of RAB43 is activated by USP6NL. Involved in retrograde transport from the endocytic pathway to the Golgi apparatus. Involved in the transport of Shiga toxin from early and recycling endosomes to the trans-Golgi network. Required for the structural integrity of the Golgi complex. Plays a role in the maturation of phagosomes that engulf pathogens, such as S.aureus and Mycobacterium. The polypeptide is Ras-related protein Rab-43 (Rab43) (Rattus norvegicus (Rat)).